Reading from the N-terminus, the 186-residue chain is Nucleoside triphosphate pyrophosphatase (186 aa).

Asp68 (proton acceptor) is an active-site residue.

The protein belongs to the Maf family. Requires a divalent metal cation as cofactor.

The protein resides in the cytoplasm. It catalyses the reaction a ribonucleoside 5'-triphosphate + H2O = a ribonucleoside 5'-phosphate + diphosphate + H(+). It carries out the reaction a 2'-deoxyribonucleoside 5'-triphosphate + H2O = a 2'-deoxyribonucleoside 5'-phosphate + diphosphate + H(+). Its function is as follows. Nucleoside triphosphate pyrophosphatase. May have a dual role in cell division arrest and in preventing the incorporation of modified nucleotides into cellular nucleic acids. The sequence is that of Nucleoside triphosphate pyrophosphatase from Prochlorococcus marinus (strain MIT 9303).